The primary structure comprises 392 residues: Heat-inducible transcription repressor HrcA (392 aa).

The protein belongs to the HrcA family.

In terms of biological role, negative regulator of class I heat shock genes (grpE-dnaK-dnaJ and groELS operons). Prevents heat-shock induction of these operons. This is Heat-inducible transcription repressor HrcA from Chlamydia trachomatis serovar L2 (strain ATCC VR-902B / DSM 19102 / 434/Bu).